Consider the following 251-residue polypeptide: Coproheme decarboxylase (251 aa).

Fe-coproporphyrin III contacts are provided by residues R133, 147-151, H174, Q187, and S225; that span reads YPMSK. Residue Y147 is part of the active site.

Belongs to the ChdC family. Type 1 subfamily. Fe-coproporphyrin III serves as cofactor.

The enzyme catalyses Fe-coproporphyrin III + 2 H2O2 + 2 H(+) = heme b + 2 CO2 + 4 H2O. The catalysed reaction is Fe-coproporphyrin III + H2O2 + H(+) = harderoheme III + CO2 + 2 H2O. It carries out the reaction harderoheme III + H2O2 + H(+) = heme b + CO2 + 2 H2O. It functions in the pathway porphyrin-containing compound metabolism; protoheme biosynthesis. Its function is as follows. Involved in coproporphyrin-dependent heme b biosynthesis. Catalyzes the decarboxylation of Fe-coproporphyrin III (coproheme) to heme b (protoheme IX), the last step of the pathway. The reaction occurs in a stepwise manner with a three-propionate intermediate. The sequence is that of Coproheme decarboxylase from Listeria innocua serovar 6a (strain ATCC BAA-680 / CLIP 11262).